The sequence spans 119 residues: Large ribosomal subunit protein uL18 (119 aa).

The protein belongs to the universal ribosomal protein uL18 family. As to quaternary structure, part of the 50S ribosomal subunit; part of the 5S rRNA/L5/L18/L25 subcomplex. Contacts the 5S and 23S rRNAs.

Its function is as follows. This is one of the proteins that bind and probably mediate the attachment of the 5S RNA into the large ribosomal subunit, where it forms part of the central protuberance. The polypeptide is Large ribosomal subunit protein uL18 (Nitrosomonas europaea (strain ATCC 19718 / CIP 103999 / KCTC 2705 / NBRC 14298)).